A 436-amino-acid chain; its full sequence is GTPase Der (436 aa).

EngA-type G domains follow at residues 4–167 (PVVA…PKVE) and 176–351 (IRFC…ESHN). Residues 10–17 (GRPNVGKS), 57–61 (DTGGI), 119–122 (NKVD), 182–189 (GRPNVGKS), 229–233 (DTAGM), and 294–297 (NKWD) each bind GTP. The region spanning 352–436 (IRVQTNVLND…PIRIIARARD (85 aa)) is the KH-like domain.

The protein belongs to the TRAFAC class TrmE-Era-EngA-EngB-Septin-like GTPase superfamily. EngA (Der) GTPase family. Associates with the 50S ribosomal subunit.

In terms of biological role, GTPase that plays an essential role in the late steps of ribosome biogenesis. This Bacillus cytotoxicus (strain DSM 22905 / CIP 110041 / 391-98 / NVH 391-98) protein is GTPase Der.